The chain runs to 453 residues: Homogentisate 1,2-dioxygenase (453 aa).

The Proton acceptor role is filled by His-306. 2 residues coordinate Fe cation: His-349 and Glu-355. Homogentisate-binding residues include Tyr-364 and His-385. His-385 contacts Fe cation.

This sequence belongs to the homogentisate dioxygenase family. In terms of assembly, hexamer; dimer of trimers. Fe cation is required as a cofactor.

It catalyses the reaction homogentisate + O2 = 4-maleylacetoacetate + H(+). Its pathway is amino-acid degradation; L-phenylalanine degradation; acetoacetate and fumarate from L-phenylalanine: step 4/6. Functionally, involved in the catabolism of homogentisate (2,5-dihydroxyphenylacetate or 2,5-OH-PhAc), a central intermediate in the degradation of phenylalanine and tyrosine. Catalyzes the oxidative ring cleavage of the aromatic ring of homogentisate to yield maleylacetoacetate. This chain is Homogentisate 1,2-dioxygenase, found in Rhizobium etli (strain ATCC 51251 / DSM 11541 / JCM 21823 / NBRC 15573 / CFN 42).